Reading from the N-terminus, the 279-residue chain is Acetyl-coenzyme A carboxylase carboxyl transferase subunit beta (279 aa).

The CoA carboxyltransferase N-terminal domain occupies 23–279 (LWWKCEECGA…IVRLAGMLKV (257 aa)). Positions 27, 30, 46, and 49 each coordinate Zn(2+). Residues 27 to 49 (CEECGAMIHKKQLEDHVYTCSDC) form a C4-type zinc finger.

This sequence belongs to the AccD/PCCB family. As to quaternary structure, acetyl-CoA carboxylase is a heterohexamer composed of biotin carboxyl carrier protein (AccB), biotin carboxylase (AccC) and two subunits each of ACCase subunit alpha (AccA) and ACCase subunit beta (AccD). It depends on Zn(2+) as a cofactor.

The protein localises to the cytoplasm. The enzyme catalyses N(6)-carboxybiotinyl-L-lysyl-[protein] + acetyl-CoA = N(6)-biotinyl-L-lysyl-[protein] + malonyl-CoA. It participates in lipid metabolism; malonyl-CoA biosynthesis; malonyl-CoA from acetyl-CoA: step 1/1. Its function is as follows. Component of the acetyl coenzyme A carboxylase (ACC) complex. Biotin carboxylase (BC) catalyzes the carboxylation of biotin on its carrier protein (BCCP) and then the CO(2) group is transferred by the transcarboxylase to acetyl-CoA to form malonyl-CoA. This Chlorobium limicola (strain DSM 245 / NBRC 103803 / 6330) protein is Acetyl-coenzyme A carboxylase carboxyl transferase subunit beta.